We begin with the raw amino-acid sequence, 670 residues long: UvrABC system protein B (670 aa).

Positions 26–183 (EGLEDGLAHQ…RRLAELQYAR (158 aa)) constitute a Helicase ATP-binding domain. 39-46 (GVTGSGKT) serves as a coordination point for ATP. Residues 92-115 (YYDYYQPEAYVPSSDTFIEKDAAV) carry the Beta-hairpin motif. In terms of domain architecture, Helicase C-terminal spans 431–597 (QVDDLLSEIR…GLNKKVSDVL (167 aa)). The 36-residue stretch at 630–665 (DQKIRELEAQMYTHAQNLEFELAAGLRDEIHQLREQ) folds into the UVR domain.

This sequence belongs to the UvrB family. Forms a heterotetramer with UvrA during the search for lesions. Interacts with UvrC in an incision complex.

The protein localises to the cytoplasm. The UvrABC repair system catalyzes the recognition and processing of DNA lesions. A damage recognition complex composed of 2 UvrA and 2 UvrB subunits scans DNA for abnormalities. Upon binding of the UvrA(2)B(2) complex to a putative damaged site, the DNA wraps around one UvrB monomer. DNA wrap is dependent on ATP binding by UvrB and probably causes local melting of the DNA helix, facilitating insertion of UvrB beta-hairpin between the DNA strands. Then UvrB probes one DNA strand for the presence of a lesion. If a lesion is found the UvrA subunits dissociate and the UvrB-DNA preincision complex is formed. This complex is subsequently bound by UvrC and the second UvrB is released. If no lesion is found, the DNA wraps around the other UvrB subunit that will check the other stand for damage. The chain is UvrABC system protein B from Serratia proteamaculans (strain 568).